Here is a 91-residue protein sequence, read N- to C-terminus: UPF0213 protein NGO_1598 (91 aa).

Residues 4–83 (SNWSVYLILC…AAQKRQLWEQ (80 aa)) enclose the GIY-YIG domain.

This sequence belongs to the UPF0213 family.

This chain is UPF0213 protein NGO_1598, found in Neisseria gonorrhoeae (strain ATCC 700825 / FA 1090).